Reading from the N-terminus, the 361-residue chain is C3a anaphylatoxin chemotactic receptor (361 aa).

Residues 1-64 (MQQETQAPPL…FASSEVRVIS (64 aa)) are Extracellular-facing. N-linked (GlcNAc...) asparagine glycans are attached at residues N36 and N50. A helical membrane pass occupies residues 65 to 85 (LVVYCLTFLLGVPGNSFVIFI). Topologically, residues 86 to 96 (AGMKMKRTVNT) are cytoplasmic. A helical membrane pass occupies residues 97 to 117 (IWFLNLATADLLCCLSVPLTV). Residues 118–134 (AEILLDHHWPYGYAMCK) are Extracellular-facing. The cysteines at positions 133 and 210 are disulfide-linked. A helical transmembrane segment spans residues 135 to 155 (ILPSVIVISMFASVFTLNIIS). Residues 156–177 (LDRFTQVITPVWAQNHRSLLLA) lie on the Cytoplasmic side of the membrane. The chain crosses the membrane as a helical span at residues 178–198 (RLSCVAVWILALLLSLPFMIL). The Extracellular portion of the chain corresponds to 199-224 (RRTYEEFNMTVCTFDDDDFTTYGALS). A helical membrane pass occupies residues 225–245 (IVRFVFGFLIPLMSIVTCYGI). Residues 246–262 (IARKLGSRHFRSGRAFR) lie on the Cytoplasmic side of the membrane. The chain crosses the membrane as a helical span at residues 263–283 (IMLAVIVAFFLCWMPYHVLDL). Residues 284–301 (IRSYGGESSSMVALKVDP) are Extracellular-facing. A helical transmembrane segment spans residues 302 to 322 (LAISLAYVNSCLNPVLYVFMG). Residues 323-361 (QDFKNKVQLSLRRVFERAFSEEGTQISRSTQSQQVHSVL) lie on the Cytoplasmic side of the membrane.

It belongs to the G-protein coupled receptor 1 family.

The protein localises to the cell membrane. Functionally, receptor for the chemotactic and inflammatory peptide anaphylatoxin C3a. This receptor stimulates chemotaxis, granule enzyme release and superoxide anion production. This chain is C3a anaphylatoxin chemotactic receptor (c3ar1), found in Danio rerio (Zebrafish).